Reading from the N-terminus, the 174-residue chain is Trypsin inhibitor (174 aa).

2 cysteine pairs are disulfide-bonded: Cys40–Cys86 and Cys131–Cys140.

This sequence belongs to the protease inhibitor I3 (leguminous Kunitz-type inhibitor) family. Heterodimer of an alpha and a beta chain linked by a disulfide bond.

In terms of biological role, inhibits trypsin and chymotrypsin with a 1:1 stoichiometry, with dissociation constants of 1.56 nM and 120 nM respectively. Inhibits plasma kallikrein, factor XIIa and plasmin with dissociation constants of 5.0 nM, 150 nM and 18 nM respectively. Does not inhibit factor Xa, thrombin, tissue kallikrein or cysteine proteinases such as papain and bromelain. In Enterolobium contortisiliquum (Pacara earpod tree), this protein is Trypsin inhibitor.